An 89-amino-acid polypeptide reads, in one-letter code: Small ribosomal subunit protein uS15 (89 aa).

This sequence belongs to the universal ribosomal protein uS15 family. In terms of assembly, part of the 30S ribosomal subunit. Forms a bridge to the 50S subunit in the 70S ribosome, contacting the 23S rRNA.

One of the primary rRNA binding proteins, it binds directly to 16S rRNA where it helps nucleate assembly of the platform of the 30S subunit by binding and bridging several RNA helices of the 16S rRNA. In terms of biological role, forms an intersubunit bridge (bridge B4) with the 23S rRNA of the 50S subunit in the ribosome. In Chlamydia pneumoniae (Chlamydophila pneumoniae), this protein is Small ribosomal subunit protein uS15.